Reading from the N-terminus, the 361-residue chain is Phosphoserine aminotransferase (361 aa).

Position 42 (arginine 42) interacts with L-glutamate. Residues 76 to 77, tryptophan 102, threonine 153, aspartate 173, and glutamine 196 contribute to the pyridoxal 5'-phosphate site; that span reads AR. Lysine 197 bears the N6-(pyridoxal phosphate)lysine mark. A pyridoxal 5'-phosphate-binding site is contributed by 238–239; it reads NT.

It belongs to the class-V pyridoxal-phosphate-dependent aminotransferase family. SerC subfamily. In terms of assembly, homodimer. Requires pyridoxal 5'-phosphate as cofactor.

It localises to the cytoplasm. It catalyses the reaction O-phospho-L-serine + 2-oxoglutarate = 3-phosphooxypyruvate + L-glutamate. The catalysed reaction is 4-(phosphooxy)-L-threonine + 2-oxoglutarate = (R)-3-hydroxy-2-oxo-4-phosphooxybutanoate + L-glutamate. The protein operates within amino-acid biosynthesis; L-serine biosynthesis; L-serine from 3-phospho-D-glycerate: step 2/3. Its pathway is cofactor biosynthesis; pyridoxine 5'-phosphate biosynthesis; pyridoxine 5'-phosphate from D-erythrose 4-phosphate: step 3/5. Catalyzes the reversible conversion of 3-phosphohydroxypyruvate to phosphoserine and of 3-hydroxy-2-oxo-4-phosphonooxybutanoate to phosphohydroxythreonine. The polypeptide is Phosphoserine aminotransferase (Pectobacterium atrosepticum (strain SCRI 1043 / ATCC BAA-672) (Erwinia carotovora subsp. atroseptica)).